A 147-amino-acid polypeptide reads, in one-letter code: Large ribosomal subunit protein uL22 (147 aa).

This sequence belongs to the universal ribosomal protein uL22 family. As to quaternary structure, part of the 50S ribosomal subunit.

This protein binds specifically to 23S rRNA; its binding is stimulated by other ribosomal proteins, e.g. L4, L17, and L20. It is important during the early stages of 50S assembly. It makes multiple contacts with different domains of the 23S rRNA in the assembled 50S subunit and ribosome. Functionally, the globular domain of the protein is located near the polypeptide exit tunnel on the outside of the subunit, while an extended beta-hairpin is found that lines the wall of the exit tunnel in the center of the 70S ribosome. This is Large ribosomal subunit protein uL22 from Fervidobacterium nodosum (strain ATCC 35602 / DSM 5306 / Rt17-B1).